Reading from the N-terminus, the 316-residue chain is tRNA dimethylallyltransferase (316 aa).

An ATP-binding site is contributed by 17 to 24 (GPTASGKT). 19-24 (TASGKT) is a binding site for substrate. Interaction with substrate tRNA regions lie at residues 42-45 (DSVL), 166-170 (QRLSR), 247-252 (RCVGYR), and 280-287 (KRQITWLR).

Belongs to the IPP transferase family. In terms of assembly, monomer. It depends on Mg(2+) as a cofactor.

The enzyme catalyses adenosine(37) in tRNA + dimethylallyl diphosphate = N(6)-dimethylallyladenosine(37) in tRNA + diphosphate. Functionally, catalyzes the transfer of a dimethylallyl group onto the adenine at position 37 in tRNAs that read codons beginning with uridine, leading to the formation of N6-(dimethylallyl)adenosine (i(6)A). This Shigella flexneri protein is tRNA dimethylallyltransferase.